Reading from the N-terminus, the 302-residue chain is Oxygen-dependent coproporphyrinogen-III oxidase (302 aa).

Substrate is bound at residue serine 94. 2 residues coordinate a divalent metal cation: histidine 98 and histidine 108. The active-site Proton donor is histidine 108. 110-112 (NVR) is a substrate binding site. A divalent metal cation-binding residues include histidine 147 and histidine 177. The interval 242–277 (YVEFNLVWDRGTLFGLQSGGRTESILMSMPPLVRWE) is important for dimerization. Residue 260–262 (GGR) coordinates substrate.

Belongs to the aerobic coproporphyrinogen-III oxidase family. In terms of assembly, homodimer. A divalent metal cation is required as a cofactor.

Its subcellular location is the cytoplasm. The catalysed reaction is coproporphyrinogen III + O2 + 2 H(+) = protoporphyrinogen IX + 2 CO2 + 2 H2O. Its pathway is porphyrin-containing compound metabolism; protoporphyrin-IX biosynthesis; protoporphyrinogen-IX from coproporphyrinogen-III (O2 route): step 1/1. Its function is as follows. Involved in the heme biosynthesis. Catalyzes the aerobic oxidative decarboxylation of propionate groups of rings A and B of coproporphyrinogen-III to yield the vinyl groups in protoporphyrinogen-IX. This chain is Oxygen-dependent coproporphyrinogen-III oxidase, found in Chromobacterium violaceum (strain ATCC 12472 / DSM 30191 / JCM 1249 / CCUG 213 / NBRC 12614 / NCIMB 9131 / NCTC 9757 / MK).